The following is a 773-amino-acid chain: MVYHHHNHESRIIHCRKQLTSWRRRSLLLTIIVVTATVVSLISQEAEAHNQNAPPILYVRERNWRISETEKVGQIIDRVRAEDPDGDDLIFGIEPRFSLPGGENDASPPEKIPFQIDRETGVVTLNESLAGRAGQNFLIYITVTDGSYTAKNEVFINILGERENSSGYRPQTSISNVVHNISQFLPRFDQLPGVQSIRNGLPNSRPGGWYPPVPQNNIFGPPPFGNNYPPPPPNIPGVRGEQSGEEEQPDEEVTPTTPVRISSTTPKSRTKLTPITANNSTRVESAIPAETTTPSGGHHNNSSSPITIFSLKSGTIPIVVTVGGFFVAIAVLLAYLCRRRLCAISRTLKKTKEKEELAKKSNQSQLSSTLTDDSRNSMVMQQWQGPVAFANRYVPWERDQQMGIATSQLSTGVTNGGVSSPGVPSPGTGEPGSNLGPGCLTGGAGSSGAPENAFAGEANCDRWEFPRYRLKFFNILGEGAFGQVWRCEATNINGNEGITTVAVKTLKESATEVDRKDLLSELEVMKSLEPHINVVHLLGCCTDKDPTFVILEYVNRGKLQTYLRSSRAERHYGNTHGKSNVLTSCDLTSFMYQVAKGMDYLTSRGIIHRDLAARNILITDDHTCKVADFGFARDVITSKIYERKSEGKLPIRWMATESLYDNIFSVKSDIWSFGILMWEIVTLGSTPYPGISAADVMRKVRDGYRLEKPEHCRRELYNIMYYCWSHDPQERPLFAEIIQMLDKLLHTEMDYIELERFPDHNYYNIVSLSGEKL.

The signal sequence occupies residues 1–48 (MVYHHHNHESRIIHCRKQLTSWRRRSLLLTIIVVTATVVSLISQEAEA). The Extracellular portion of the chain corresponds to 49-315 (HNQNAPPILY…ITIFSLKSGT (267 aa)). Positions 58 to 172 (YVRERNWRIS…ENSSGYRPQT (115 aa)) constitute a Cadherin domain. 3 N-linked (GlcNAc...) asparagine glycosylation sites follow: N126, N164, and N180. The disordered stretch occupies residues 196–302 (SIRNGLPNSR…TPSGGHHNNS (107 aa)). The span at 209 to 235 (WYPPVPQNNIFGPPPFGNNYPPPPPNI) shows a compositional bias: pro residues. Over residues 243–253 (SGEEEQPDEEV) the composition is skewed to acidic residues. 2 stretches are compositionally biased toward polar residues: residues 254–283 (TPTT…STRV) and 290–302 (ETTT…HNNS). N278, N279, N300, and N301 each carry an N-linked (GlcNAc...) asparagine glycan. Residues 316-336 (IPIVVTVGGFFVAIAVLLAYL) traverse the membrane as a helical segment. Over 337–773 (CRRRLCAISR…NIVSLSGEKL (437 aa)) the chain is Cytoplasmic. 2 disordered regions span residues 352-373 (KEKE…LTDD) and 411-447 (TGVT…AGSS). Polar residues predominate over residues 361-373 (SNQSQLSSTLTDD). The segment covering 411–433 (TGVTNGGVSSPGVPSPGTGEPGS) has biased composition (low complexity). One can recognise a Protein kinase domain in the interval 470–749 (LKFFNILGEG…MLDKLLHTEM (280 aa)). ATP is bound by residues 476–484 (LGEGAFGQV) and K504. D610 functions as the Proton acceptor in the catalytic mechanism.

Belongs to the protein kinase superfamily. Tyr protein kinase family. Fibroblast growth factor receptor subfamily.

It is found in the membrane. The enzyme catalyses L-tyrosyl-[protein] + ATP = O-phospho-L-tyrosyl-[protein] + ADP + H(+). The chain is Tyrosine kinase receptor Cad96Ca (Cad96Ca) from Drosophila melanogaster (Fruit fly).